An 81-amino-acid chain; its full sequence is Bursicon (81 aa).

As to quaternary structure, heterodimer of burs and pburs. Central nervous system. Coexpressed with CCAP in most CCAP-specific neurons. Coexpressed with pburs in the large bilateral lateral neurosecretory neurons of the first three unfused abdominal ganglia and in all anterior bilateral cell pairs in the thoracic ganglia.

The protein resides in the secreted. Functionally, final heterodimeric neurohormone released at the end of the molting cycle, involved in the sclerotization (tanning) of the insect cuticle, melanization and wing spreading. This is Bursicon (burs) from Periplaneta americana (American cockroach).